A 162-amino-acid polypeptide reads, in one-letter code: MKAKSLTLISITVMFFLFLIYSFNDLFFYSEVKYGDIHEHLDLRMQGIRFSLSHYIIDDKSQLVISEGIYGIGLKMPTGKYYLFPLHSYQSSPDNMARGSLNSLASPLSLYVYEIHNKKNNVVTFFNGDRGFIDVNGETIHLSSLFLGVQGEHIHTSYHDVS.

This chain is Protein PsaF (psaF), found in Yersinia pestis.